The following is a 46-amino-acid chain: Phospholipase A2 superbin c (46 aa).

Residues tyrosine 28, glycine 30, and glycine 32 each contribute to the Ca(2+) site. A disulfide bond links cysteine 29 and cysteine 45.

The cofactor is Ca(2+). In terms of tissue distribution, expressed by the venom gland.

It is found in the secreted. The enzyme catalyses a 1,2-diacyl-sn-glycero-3-phosphocholine + H2O = a 1-acyl-sn-glycero-3-phosphocholine + a fatty acid + H(+). In terms of biological role, snake venom phospholipase A2 (PLA2) that inhibits collagen-induced platelet aggregation. In terms of inhibition of platelet aggregation, superbin c is more potent as superbin d. PLA2 catalyzes the calcium-dependent hydrolysis of the 2-acyl groups in 3-sn-phosphoglycerides. The protein is Phospholipase A2 superbin c of Austrelaps superbus (Lowland copperhead snake).